A 421-amino-acid chain; its full sequence is Fasciclin-like arabinogalactan protein ARB_02922 (421 aa).

The N-terminal stretch at 1 to 17 (MLLYYILVALWATVTYA) is a signal peptide. FAS1 domains are found at residues 18 to 167 (KSFS…DRPL) and 169 to 296 (LPQS…SDVL). 8 N-linked (GlcNAc...) asparagine glycosylation sites follow: Asn-52, Asn-75, Asn-80, Asn-120, Asn-145, Asn-181, Asn-223, and Asn-300. The segment at 300 to 401 (NDTAKPVPNA…NTPQPGAAAT (102 aa)) is disordered. Gly residues-rich tracts occupy residues 344–356 (TSGG…GGGE) and 372–387 (SGGG…GGPG). A compositionally biased stretch (low complexity) spans 388 to 401 (PTATNTPQPGAAAT). The GPI-anchor amidated glycine moiety is linked to residue Gly-397. A propeptide spans 398 to 421 (AAATERAKAGLAAVVGLGVVLINA) (removed in mature form).

The protein belongs to the fasciclin-like AGP family.

The protein localises to the cell membrane. In terms of biological role, may be a cell surface adhesion protein. The polypeptide is Fasciclin-like arabinogalactan protein ARB_02922 (Arthroderma benhamiae (strain ATCC MYA-4681 / CBS 112371) (Trichophyton mentagrophytes)).